The sequence spans 183 residues: Probable apo-citrate lyase phosphoribosyl-dephospho-CoA transferase (183 aa).

It belongs to the CitX family.

The enzyme catalyses apo-[citrate lyase ACP] + 2'-(5''-triphospho-alpha-D-ribosyl)-3'-dephospho-CoA = holo-[citrate lyase ACP] + diphosphate. In terms of biological role, transfers 2-(5''-triphosphoribosyl)-3'-dephosphocoenzyme-A on a serine residue to the apo-acyl carrier protein (gamma chain) of the citrate lyase to yield holo-acyl carrier protein. This Escherichia coli (strain 55989 / EAEC) protein is Probable apo-citrate lyase phosphoribosyl-dephospho-CoA transferase.